The primary structure comprises 149 residues: Pleckstrin homology domain-containing family J member 1 (149 aa).

The region spanning 15–108 is the PH domain; the sequence is RAEKAAELGM…WVEALTNASY (94 aa).

This is Pleckstrin homology domain-containing family J member 1 (plekhj1) from Xenopus laevis (African clawed frog).